Reading from the N-terminus, the 945-residue chain is Isoleucine--tRNA ligase (945 aa).

The 'HIGH' region motif lies at 66–76 (PYANGDIHLGH). Position 581 (E581) interacts with L-isoleucyl-5'-AMP. The short motif at 622–626 (KMSKS) is the 'KMSKS' region element. ATP is bound at residue K625. Zn(2+) contacts are provided by C908, C911, C928, and C931.

It belongs to the class-I aminoacyl-tRNA synthetase family. IleS type 1 subfamily. Monomer. Requires Zn(2+) as cofactor.

It is found in the cytoplasm. The catalysed reaction is tRNA(Ile) + L-isoleucine + ATP = L-isoleucyl-tRNA(Ile) + AMP + diphosphate. Functionally, catalyzes the attachment of isoleucine to tRNA(Ile). As IleRS can inadvertently accommodate and process structurally similar amino acids such as valine, to avoid such errors it has two additional distinct tRNA(Ile)-dependent editing activities. One activity is designated as 'pretransfer' editing and involves the hydrolysis of activated Val-AMP. The other activity is designated 'posttransfer' editing and involves deacylation of mischarged Val-tRNA(Ile). This chain is Isoleucine--tRNA ligase, found in Burkholderia ambifaria (strain MC40-6).